Consider the following 287-residue polypeptide: Phosphatidylserine decarboxylase proenzyme (287 aa).

Active-site charge relay system; for autoendoproteolytic cleavage activity residues include D90, H147, and S252. Residue S252 is the Schiff-base intermediate with substrate; via pyruvic acid; for decarboxylase activity of the active site. The residue at position 252 (S252) is a Pyruvic acid (Ser); by autocatalysis.

Belongs to the phosphatidylserine decarboxylase family. PSD-B subfamily. Prokaryotic type I sub-subfamily. Heterodimer of a large membrane-associated beta subunit and a small pyruvoyl-containing alpha subunit. The cofactor is pyruvate. Is synthesized initially as an inactive proenzyme. Formation of the active enzyme involves a self-maturation process in which the active site pyruvoyl group is generated from an internal serine residue via an autocatalytic post-translational modification. Two non-identical subunits are generated from the proenzyme in this reaction, and the pyruvate is formed at the N-terminus of the alpha chain, which is derived from the carboxyl end of the proenzyme. The autoendoproteolytic cleavage occurs by a canonical serine protease mechanism, in which the side chain hydroxyl group of the serine supplies its oxygen atom to form the C-terminus of the beta chain, while the remainder of the serine residue undergoes an oxidative deamination to produce ammonia and the pyruvoyl prosthetic group on the alpha chain. During this reaction, the Ser that is part of the protease active site of the proenzyme becomes the pyruvoyl prosthetic group, which constitutes an essential element of the active site of the mature decarboxylase.

It localises to the cell membrane. The catalysed reaction is a 1,2-diacyl-sn-glycero-3-phospho-L-serine + H(+) = a 1,2-diacyl-sn-glycero-3-phosphoethanolamine + CO2. It functions in the pathway phospholipid metabolism; phosphatidylethanolamine biosynthesis; phosphatidylethanolamine from CDP-diacylglycerol: step 2/2. Functionally, catalyzes the formation of phosphatidylethanolamine (PtdEtn) from phosphatidylserine (PtdSer). The sequence is that of Phosphatidylserine decarboxylase proenzyme from Pseudomonas entomophila (strain L48).